Consider the following 352-residue polypeptide: MQVSDFHFELPDELIARYPKAERTASRLLQLDGNSGQLVDGTFKDVLELVEPGDLLVFNNTRVIPARMFGRKASGGKLEVLVERMLDEHTILAHVRSSKPPKPGTELYLGENDEFHAVMQARHDALFEIRFTAETVVLDILNQIGHMPLPPYIDRPDEEADKERYQTVYNQKPGAVAAPTAGLHFDQALLEQIQAKGVELAYVTLHVGAGTFQPVRVENIHDHHMHAEYVEVPQEVVDAITATKARGGRVVAVGTTSVRSLESAAQDALQKGTELKPFFGDTEIFIFPGYQYQLVDCLITNFHLPESTLIMLVSAFAGYEHTMAAYEHAVKEQYRFFSYGDAMFIRKQMTKA.

This sequence belongs to the QueA family. Monomer.

The protein resides in the cytoplasm. The enzyme catalyses 7-aminomethyl-7-carbaguanosine(34) in tRNA + S-adenosyl-L-methionine = epoxyqueuosine(34) in tRNA + adenine + L-methionine + 2 H(+). It functions in the pathway tRNA modification; tRNA-queuosine biosynthesis. In terms of biological role, transfers and isomerizes the ribose moiety from AdoMet to the 7-aminomethyl group of 7-deazaguanine (preQ1-tRNA) to give epoxyqueuosine (oQ-tRNA). The polypeptide is S-adenosylmethionine:tRNA ribosyltransferase-isomerase (Vibrio cholerae serotype O1 (strain ATCC 39315 / El Tor Inaba N16961)).